The following is a 389-amino-acid chain: Putative phosphoserine aminotransferase (389 aa).

Arg45 serves as a coordination point for L-glutamate. Residues 79–80 (GT), Trp114, Thr169, Asp191, and Gln214 contribute to the pyridoxal 5'-phosphate site. Residue Lys215 is modified to N6-(pyridoxal phosphate)lysine. 265-266 (NT) lines the pyridoxal 5'-phosphate pocket.

Belongs to the class-V pyridoxal-phosphate-dependent aminotransferase family. SerC subfamily. As to quaternary structure, homodimer. It depends on pyridoxal 5'-phosphate as a cofactor.

It carries out the reaction O-phospho-L-serine + 2-oxoglutarate = 3-phosphooxypyruvate + L-glutamate. The enzyme catalyses 4-(phosphooxy)-L-threonine + 2-oxoglutarate = (R)-3-hydroxy-2-oxo-4-phosphooxybutanoate + L-glutamate. It functions in the pathway amino-acid biosynthesis; L-serine biosynthesis; L-serine from 3-phospho-D-glycerate: step 2/3. The protein operates within cofactor biosynthesis; pyridoxine 5'-phosphate biosynthesis; pyridoxine 5'-phosphate from D-erythrose 4-phosphate: step 3/5. Catalyzes the reversible conversion of 3-phosphohydroxypyruvate to phosphoserine and of 3-hydroxy-2-oxo-4-phosphonooxybutanoate to phosphohydroxythreonine. This is Putative phosphoserine aminotransferase from Schizosaccharomyces pombe (strain 972 / ATCC 24843) (Fission yeast).